The primary structure comprises 202 residues: uncharacterized protein (202 aa).

Residues 175–195 traverse the membrane as a helical segment; the sequence is INTGIALFIILTSLLVYFIQF.

The protein resides in the membrane. This is an uncharacterized protein from Dictyostelium discoideum (Social amoeba).